Here is a 39-residue protein sequence, read N- to C-terminus: Phosphate starvation-inducible protein 1 (39 aa).

The protein localises to the cell outer membrane. This is Phosphate starvation-inducible protein 1 from Pseudomonas fluorescens.